The primary structure comprises 364 residues: Ferrochelatase (364 aa).

Fe cation-binding residues include His211 and Glu292.

The protein belongs to the ferrochelatase family.

The protein resides in the cytoplasm. The enzyme catalyses heme b + 2 H(+) = protoporphyrin IX + Fe(2+). It participates in porphyrin-containing compound metabolism; protoheme biosynthesis; protoheme from protoporphyrin-IX: step 1/1. Functionally, catalyzes the ferrous insertion into protoporphyrin IX. The chain is Ferrochelatase from Nitrosomonas europaea (strain ATCC 19718 / CIP 103999 / KCTC 2705 / NBRC 14298).